The sequence spans 140 residues: Hemoglobin subunit alpha-D (140 aa).

Residues methionine 1–arginine 140 form the Globin domain. Residues histidine 57 and histidine 86 each coordinate heme b.

This sequence belongs to the globin family. As to quaternary structure, heterotetramer of two alpha-D chains and two beta chains. In terms of tissue distribution, red blood cells.

Its function is as follows. Involved in oxygen transport from the lung to the various peripheral tissues. This Columba livia (Rock dove) protein is Hemoglobin subunit alpha-D (HBAD).